The sequence spans 760 residues: Catalase-peroxidase (760 aa).

Residues 1 to 24 form a disordered region; that stretch reads MAESKCPFKSQGSRSNVAGGGTRN. The tryptophyl-tyrosyl-methioninium (Trp-Tyr) (with M-268) cross-link spans 96–242; it reads WHSAGTYRVF…LAAAHMGLIY (147 aa). The active-site Proton acceptor is H97. A cross-link (tryptophyl-tyrosyl-methioninium (Tyr-Met) (with W-96)) is located at residues 242–268; the sequence is YVNPEGPDGNPDPVAAAHDIRVTFGRM. H283 contacts heme b.

Belongs to the peroxidase family. Peroxidase/catalase subfamily. As to quaternary structure, homodimer or homotetramer. Requires heme b as cofactor. Formation of the three residue Trp-Tyr-Met cross-link is important for the catalase, but not the peroxidase activity of the enzyme.

It is found in the cytoplasm. It catalyses the reaction H2O2 + AH2 = A + 2 H2O. The catalysed reaction is 2 H2O2 = O2 + 2 H2O. In terms of biological role, bifunctional enzyme with both catalase and broad-spectrum peroxidase activity. In Aspergillus clavatus (strain ATCC 1007 / CBS 513.65 / DSM 816 / NCTC 3887 / NRRL 1 / QM 1276 / 107), this protein is Catalase-peroxidase.